Consider the following 147-residue polypeptide: Basic phospholipase A2 beta-bungarotoxin A2 chain (147 aa).

An N-terminal signal peptide occupies residues 1–19; it reads MYPAHLLVLSAVCVSLLGA. The propeptide occupies 20 to 27; it reads ANIPPYPL. Intrachain disulfides connect Cys-54–Cys-146, Cys-56–Cys-72, Cys-71–Cys-127, Cys-78–Cys-120, Cys-88–Cys-113, and Cys-106–Cys-118. 3 residues coordinate Ca(2+): Tyr-55, Gly-57, and Gly-59. The active site involves His-75. Asp-76 provides a ligand contact to Ca(2+). Residue Asp-121 is part of the active site.

The protein belongs to the phospholipase A2 family. Group I subfamily. D49 sub-subfamily. Heterodimer; disulfide-linked. The A chains have phospholipase A2 activity and the B chains show homology with the basic protease inhibitors. Requires Ca(2+) as cofactor. Expressed by the venom gland.

The protein localises to the secreted. It carries out the reaction a 1,2-diacyl-sn-glycero-3-phosphocholine + H2O = a 1-acyl-sn-glycero-3-phosphocholine + a fatty acid + H(+). In terms of biological role, snake venom phospholipase A2 (PLA2) that inhibits neuromuscular transmission by blocking acetylcholine release from the nerve termini. PLA2 catalyzes the calcium-dependent hydrolysis of the 2-acyl groups in 3-sn-phosphoglycerides. This chain is Basic phospholipase A2 beta-bungarotoxin A2 chain, found in Bungarus caeruleus (Indian krait).